The following is a 115-amino-acid chain: Large ribosomal subunit protein P2 (115 aa).

Met-1 carries the post-translational modification N-acetylmethionine. A phosphoserine mark is found at Ser-17 and Ser-19. Position 21 is an N6-acetyllysine; alternate (Lys-21). Position 21 is an N6-succinyllysine; alternate (Lys-21). Residues 78–90 (GSAAPAAGSAPAA) are compositionally biased toward low complexity. Residues 78 to 115 (GSAAPAAGSAPAAAEEKKDEKKEESEESDDDMGFGLFD) are disordered. Residues Ser-79 and Ser-86 each carry the phosphoserine modification. Residues 91-101 (AEEKKDEKKEE) are compositionally biased toward basic and acidic residues. Phosphoserine is present on residues Ser-102 and Ser-105.

Belongs to the eukaryotic ribosomal protein P1/P2 family. In terms of assembly, heterodimer with P1 at the lateral ribosomal stalk of the large ribosomal subunit.

Plays an important role in the elongation step of protein synthesis. This is Large ribosomal subunit protein P2 (RPLP2) from Homo sapiens (Human).